Here is a 179-residue protein sequence, read N- to C-terminus: Peptide deformylase 2 (179 aa).

Cysteine 102 and histidine 144 together coordinate Fe cation. Residue glutamate 145 is part of the active site. Histidine 148 is a Fe cation binding site.

Belongs to the polypeptide deformylase family. The cofactor is Fe(2+).

It carries out the reaction N-terminal N-formyl-L-methionyl-[peptide] + H2O = N-terminal L-methionyl-[peptide] + formate. Its function is as follows. Removes the formyl group from the N-terminal Met of newly synthesized proteins. Requires at least a dipeptide for an efficient rate of reaction. N-terminal L-methionine is a prerequisite for activity but the enzyme has broad specificity at other positions. The polypeptide is Peptide deformylase 2 (Nostoc sp. (strain PCC 7120 / SAG 25.82 / UTEX 2576)).